A 420-amino-acid polypeptide reads, in one-letter code: D-tagatose-1,6-bisphosphate aldolase subunit GatZ (420 aa).

The protein belongs to the GatZ/KbaZ family. GatZ subfamily. Forms a complex with GatY.

The protein operates within carbohydrate metabolism; D-tagatose 6-phosphate degradation; D-glyceraldehyde 3-phosphate and glycerone phosphate from D-tagatose 6-phosphate: step 2/2. Functionally, component of the tagatose-1,6-bisphosphate aldolase GatYZ that is required for full activity and stability of the Y subunit. Could have a chaperone-like function for the proper and stable folding of GatY. When expressed alone, GatZ does not show any aldolase activity. Is involved in the catabolism of galactitol. This Escherichia coli O139:H28 (strain E24377A / ETEC) protein is D-tagatose-1,6-bisphosphate aldolase subunit GatZ.